The sequence spans 612 residues: Alpha-glycerophosphate oxidase (612 aa).

An FAD-binding site is contributed by 21-49; the sequence is DLLIIGGGITGAGVALQAAASGLDTGLIE. The span at 398-408 shows a compositional bias: basic and acidic residues; sequence VETSTSEKELD. Positions 398–418 are disordered; that stretch reads VETSTSEKELDPSAVSRGSSF.

The protein belongs to the FAD-dependent glycerol-3-phosphate dehydrogenase family. FAD is required as a cofactor.

It is found in the cytoplasm. It catalyses the reaction sn-glycerol 3-phosphate + O2 = dihydroxyacetone phosphate + H2O2. In Streptococcus pyogenes serotype M18 (strain MGAS8232), this protein is Alpha-glycerophosphate oxidase (glpO).